The primary structure comprises 605 residues: Elongation factor 4 (605 aa).

The tr-type G domain occupies 4–181 (NKIKTFSIIA…AIVEYVPSPL (178 aa)). GTP-binding positions include 16–21 (DHGKST) and 128–131 (NKVD).

This sequence belongs to the TRAFAC class translation factor GTPase superfamily. Classic translation factor GTPase family. LepA subfamily.

The protein localises to the cell membrane. The catalysed reaction is GTP + H2O = GDP + phosphate + H(+). Functionally, required for accurate and efficient protein synthesis under certain stress conditions. May act as a fidelity factor of the translation reaction, by catalyzing a one-codon backward translocation of tRNAs on improperly translocated ribosomes. Back-translocation proceeds from a post-translocation (POST) complex to a pre-translocation (PRE) complex, thus giving elongation factor G a second chance to translocate the tRNAs correctly. Binds to ribosomes in a GTP-dependent manner. In Mycoplasmopsis synoviae (strain 53) (Mycoplasma synoviae), this protein is Elongation factor 4.